A 144-amino-acid chain; its full sequence is Maximins 4/H3 type 1 (144 aa).

Positions 1–18 are cleaved as a signal peptide; sequence MNFKYIIAVSFFIASAYA. Residues 19-43 constitute a propeptide that is removed on maturation; sequence RSEEKDVQSLSQRDVLEEESLREIR. At Asn-70 the chain carries Asparagine amide. A propeptide spanning residues 74–123 is cleaved from the precursor; it reads TAEDHEVMKRLEAVMRDLDSLDHPEEASERETRGFNQEEIANLFTKKEKR. An Isoleucine amide modification is found at Ile-143.

This sequence belongs to the bombinin family. In terms of tissue distribution, expressed by the skin glands.

The protein resides in the secreted. Maximin-4 shows antibacterial activity against both Gram-positive and Gram-negative bacteria. It also shows antimicrobial activity against the fungus C.albicans, but not against A.flavus nor P.uticale. It has little hemolytic activity. It does not possess a significant cytotoxicity against tumor cell lines. It does not possess a significant anti-HIV activity. Functionally, maximin-H3 shows antibacterial activity against both Gram-positive and Gram-negative bacteria. It also shows antimicrobial activity against the fungus C.albicans. Shows strong hemolytic activity. This is Maximins 4/H3 type 1 from Bombina maxima (Giant fire-bellied toad).